Consider the following 179-residue polypeptide: Large ribosomal subunit protein uL5 (179 aa).

The protein belongs to the universal ribosomal protein uL5 family. In terms of assembly, part of the 50S ribosomal subunit; part of the 5S rRNA/L5/L18/L25 subcomplex. Contacts the 5S rRNA and the P site tRNA. Forms a bridge to the 30S subunit in the 70S ribosome.

Functionally, this is one of the proteins that bind and probably mediate the attachment of the 5S RNA into the large ribosomal subunit, where it forms part of the central protuberance. In the 70S ribosome it contacts protein S13 of the 30S subunit (bridge B1b), connecting the 2 subunits; this bridge is implicated in subunit movement. Contacts the P site tRNA; the 5S rRNA and some of its associated proteins might help stabilize positioning of ribosome-bound tRNAs. In Burkholderia ambifaria (strain MC40-6), this protein is Large ribosomal subunit protein uL5.